The chain runs to 72 residues: Gas vesicle protein A (72 aa).

The protein belongs to the gas vesicle GvpA family. As to quaternary structure, the gas vesicle shell is 2 nm thick and consists of a single layer of this protein. It forms helical ribs nearly perpendicular to the long axis of the vesicle.

The protein resides in the gas vesicle shell. In terms of biological role, gas vesicles are hollow, gas filled proteinaceous nanostructures found in some microorganisms. During planktonic growth they allow positioning of the organism at a favorable depth for light or nutrient acquisition. GvpA forms the protein shell. This is Gas vesicle protein A from Pseudanabaena galeata (strain PCC 6901).